Here is a 550-residue protein sequence, read N- to C-terminus: Probable methionine--tRNA ligase, cytoplasmic (550 aa).

The short motif at Pro10 to Asn20 is the 'HIGH' region element. A 'KMSKS' region motif is present at residues Lys328 to Ser332. Residue Lys331 coordinates ATP.

The protein belongs to the class-I aminoacyl-tRNA synthetase family.

It is found in the cytoplasm. The enzyme catalyses tRNA(Met) + L-methionine + ATP = L-methionyl-tRNA(Met) + AMP + diphosphate. The protein is Probable methionine--tRNA ligase, cytoplasmic of Encephalitozoon cuniculi (strain GB-M1) (Microsporidian parasite).